Here is a 467-residue protein sequence, read N- to C-terminus: Methylenetetrahydrofolate--tRNA-(uracil-5-)-methyltransferase TrmFO (467 aa).

Residue 11-16 (GAGLAG) participates in FAD binding.

The protein belongs to the MnmG family. TrmFO subfamily. It depends on FAD as a cofactor.

It is found in the cytoplasm. It carries out the reaction uridine(54) in tRNA + (6R)-5,10-methylene-5,6,7,8-tetrahydrofolate + NADH + H(+) = 5-methyluridine(54) in tRNA + (6S)-5,6,7,8-tetrahydrofolate + NAD(+). It catalyses the reaction uridine(54) in tRNA + (6R)-5,10-methylene-5,6,7,8-tetrahydrofolate + NADPH + H(+) = 5-methyluridine(54) in tRNA + (6S)-5,6,7,8-tetrahydrofolate + NADP(+). Its function is as follows. Catalyzes the folate-dependent formation of 5-methyl-uridine at position 54 (M-5-U54) in all tRNAs. In Prochlorococcus marinus (strain NATL1A), this protein is Methylenetetrahydrofolate--tRNA-(uracil-5-)-methyltransferase TrmFO.